We begin with the raw amino-acid sequence, 189 residues long: Glucose-6-phosphate isomerase (189 aa).

Fe cation-binding residues include H88, H90, E97, and H136.

It belongs to the archaeal-type GPI family. In terms of assembly, homodimer. Fe cation serves as cofactor.

It is found in the cytoplasm. It carries out the reaction alpha-D-glucose 6-phosphate = beta-D-fructose 6-phosphate. It participates in carbohydrate degradation; glycolysis; D-glyceraldehyde 3-phosphate and glycerone phosphate from D-glucose: step 2/4. The sequence is that of Glucose-6-phosphate isomerase (pgiA) from Pyrococcus abyssi (strain GE5 / Orsay).